The chain runs to 106 residues: Nucleoid-associated protein BBta_7345 (106 aa).

Belongs to the YbaB/EbfC family. As to quaternary structure, homodimer.

The protein localises to the cytoplasm. It localises to the nucleoid. Functionally, binds to DNA and alters its conformation. May be involved in regulation of gene expression, nucleoid organization and DNA protection. The sequence is that of Nucleoid-associated protein BBta_7345 from Bradyrhizobium sp. (strain BTAi1 / ATCC BAA-1182).